A 487-amino-acid chain; its full sequence is Histamine H1 receptor (487 aa).

The Extracellular segment spans residues 1–29; sequence MSLPNSSCLLEDKMCEGNKTTMASPQLMP. Residues Asn5 and Asn18 are each glycosylated (N-linked (GlcNAc...) asparagine). The helical transmembrane segment at 30-50 threads the bilayer; it reads LVVVLSTISLVTVGLNLLVLY. Topologically, residues 51–64 are cytoplasmic; the sequence is AVRSERKLHTVGNL. Residues 65–89 traverse the membrane as a helical segment; sequence YIVSLSVADLIVGAVVMPMNILYLL. The Extracellular segment spans residues 90–97; that stretch reads MSKWSLGR. Residues 98-123 traverse the membrane as a helical segment; sequence PLCLFWLSMDYVASTASIFSVFILCI. Residues Cys100 and Cys180 are joined by a disulfide bond. Histamine is bound by residues Asp107 and Thr112. An important for agonist binding region spans residues 107-112; it reads DYVAST. At 124–144 the chain is on the cytoplasmic side; that stretch reads DRYRSVQQPLRYLKYRTKTRA. 2 positions are modified to phosphothreonine: Thr140 and Thr142. The helical transmembrane segment at 145 to 164 threads the bilayer; the sequence is SATILGAWFLSFLWVIPILG. Residues 165-188 are Extracellular-facing; sequence WNHFRQQISVRREDKCETDFYDVT. A helical transmembrane segment spans residues 189–211; that stretch reads WFKVMTAIINFYLPTLLMLWFYA. Position 198 (Asn198) interacts with histamine. At 212–416 the chain is on the cytoplasmic side; the sequence is KIYKAVQKHC…MNRERKAAKQ (205 aa). The residue at position 230 (Ser230) is a Phosphoserine. Residues 238 to 261 show a composition bias toward basic and acidic residues; that stretch reads KLRPENPKGDAKKPGKESPWEVLK. The segment at 238–286 is disordered; it reads KLRPENPKGDAKKPGKESPWEVLKRKPKDAGGGSVLKSPSQTPKEMKSP. A Phosphothreonine modification is found at Thr279. Phosphoserine is present on residues Ser344 and Ser347. The disordered stretch occupies residues 345–379; that stretch reads EISEDQMLGDSQSFSRTDSDTTTETAPGKGKLRSG. Positions 353–369 are enriched in polar residues; that stretch reads GDSQSFSRTDSDTTTET. Phosphoserine occurs at positions 380, 396, and 398. Residues 417–440 form a helical membrane-spanning segment; that stretch reads LGFIMAAFILCWIPYFIFFMVIAF. The tract at residues 424–428 is important for agonist binding; the sequence is FILCW. Position 431 (Tyr431) interacts with histamine. A disulfide bond links Cys441 and Cys444. The Extracellular portion of the chain corresponds to 441 to 446; sequence CKNCCN. A helical membrane pass occupies residues 447 to 469; it reads EHLHMFTIWLGYINSTLNPLIYP. At 470–487 the chain is on the cytoplasmic side; it reads LCNENFKKTFKRILHIRS.

Belongs to the G-protein coupled receptor 1 family. Post-translationally, phosphorylation at sites in the second and third cytoplasmic loops independently contribute to agonist-induced receptor down-regulation.

The protein localises to the cell membrane. In terms of biological role, G-protein-coupled receptor for histamine, a biogenic amine that functions as an immune modulator and a neurotransmitter. Through the H1 receptor, histamine mediates the contraction of smooth muscles and increases capillary permeability due to contraction of terminal venules. Also mediates neurotransmission in the central nervous system and thereby regulates circadian rhythms, emotional and locomotor activities as well as cognitive functions. This chain is Histamine H1 receptor, found in Pongo pygmaeus (Bornean orangutan).